We begin with the raw amino-acid sequence, 635 residues long: DNA mismatch repair protein MutL (635 aa).

Residues 359 to 399 (GTNKYAQPEAAKSSAAEQAVARERSSARERAAPAYKEDHPY) are disordered. A compositionally biased stretch (low complexity) spans 364 to 377 (AQPEAAKSSAAEQA). Over residues 378–399 (VARERSSARERAAPAYKEDHPY) the composition is skewed to basic and acidic residues.

This sequence belongs to the DNA mismatch repair MutL/HexB family.

This protein is involved in the repair of mismatches in DNA. It is required for dam-dependent methyl-directed DNA mismatch repair. May act as a 'molecular matchmaker', a protein that promotes the formation of a stable complex between two or more DNA-binding proteins in an ATP-dependent manner without itself being part of a final effector complex. The chain is DNA mismatch repair protein MutL from Yersinia pestis bv. Antiqua (strain Antiqua).